The following is a 111-amino-acid chain: Phosphoribosyl-ATP pyrophosphatase (111 aa).

This sequence belongs to the PRA-PH family.

The protein localises to the cytoplasm. It catalyses the reaction 1-(5-phospho-beta-D-ribosyl)-ATP + H2O = 1-(5-phospho-beta-D-ribosyl)-5'-AMP + diphosphate + H(+). The protein operates within amino-acid biosynthesis; L-histidine biosynthesis; L-histidine from 5-phospho-alpha-D-ribose 1-diphosphate: step 2/9. The sequence is that of Phosphoribosyl-ATP pyrophosphatase from Alcanivorax borkumensis (strain ATCC 700651 / DSM 11573 / NCIMB 13689 / SK2).